A 432-amino-acid polypeptide reads, in one-letter code: Succinate--CoA ligase [GDP-forming] subunit beta, mitochondrial (432 aa).

Residues 1-37 constitute a mitochondrion transit peptide; that stretch reads MAAPVGAQARKLLRDLVLRPPLLAARSQVVQLTSRRW. An ATP-grasp domain is found at 46 to 274; it reads KKLMSDNGVK…NAEFRQKDIF (229 aa). A GTP-binding site is contributed by Gln-57. Position 73 is an N6-acetyllysine (Lys-73). Lys-78 bears the N6-succinyllysine mark. Residue 90-92 participates in GTP binding; that stretch reads GRG. Lys-111, Lys-132, and Lys-139 each carry N6-acetyllysine. Position 146 (Leu-146) interacts with GTP. A Phosphoserine modification is found at Ser-161. An N6-acetyllysine mark is found at Lys-200, Lys-218, and Lys-227. Residues Asn-243 and Asp-257 each coordinate Mg(2+). At Lys-271 the chain carries N6-acetyllysine. A substrate-binding site is contributed by Asn-308. Lys-338 carries the N6-succinyllysine modification. Lys-347 is subject to N6-acetyllysine. 365 to 367 serves as a coordination point for substrate; the sequence is GIV. 2 positions are modified to N6-acetyllysine: Lys-386 and Lys-423.

Belongs to the succinate/malate CoA ligase beta subunit family. GTP-specific subunit beta subfamily. In terms of assembly, heterodimer of an alpha and a beta subunit. The beta subunit determines specificity for GTP. Mg(2+) is required as a cofactor.

The protein localises to the mitochondrion. It carries out the reaction GTP + succinate + CoA = succinyl-CoA + GDP + phosphate. The protein operates within carbohydrate metabolism; tricarboxylic acid cycle; succinate from succinyl-CoA (ligase route): step 1/1. Functionally, GTP-specific succinyl-CoA synthetase functions in the citric acid cycle (TCA), coupling the hydrolysis of succinyl-CoA to the synthesis of GTP and thus represents the only step of substrate-level phosphorylation in the TCA. The beta subunit provides nucleotide specificity of the enzyme and binds the substrate succinate, while the binding sites for coenzyme A and phosphate are found in the alpha subunit. This chain is Succinate--CoA ligase [GDP-forming] subunit beta, mitochondrial, found in Bos taurus (Bovine).